The chain runs to 756 residues: MSDRFELFLTCPKGLEGLLIEEAVGLGLEEAREHTSAVRGMATMETAYRLCLWSRLANRVLLVLKRFPMKNAEDLYHGVLDVDWQDHMLADGTLAVEFSGHGSGIDNTHFGALKVKDAIVDKLRTPQGDRPSIDKLNPDLRIHLRLDRGEAILSLDLSGHSLHQRGYRLQQGAAPLKENLAAAILIRSGWPRIAAEGGALADPMCGVGTFLVEAGMIAADMAPNLRREQWGFTAWLGHVPALWKKLHEEAVERAAAGLAKPPLWIRGYEADPRLIQPGRNNVERAGLSEWIKIYQGEVATFEPRPDQNQKGLVICNPPYGERLGDEASLLYLYQNLGERLRQACLNWEAAVFTGAPDLGKRMGIRSHKQYSFWNGALPCKLLLIKVLPDQFVTGERRTPEQRQAEREQAAYDQTPNEPQERKFNKNGNPIKPTPAPAPVIEQPRLSEGGQMFANRLQKNLKAMSKWVKREGIDCYRVYDADMPEYAMAIDLYHDWVHVQEYAAPKSIDPEKASIRMFDALAAIPQALNIDKSRVVVKRRERQSGTKQYERQAAQGKFNEVTEGGVKLLVNLTDYLDTGLFLDHRPMRMRIQKEAAGKRFLNLFCYTATASVHAAKGGARSTTSVDLSKTYLDWARRNLSLNGFSDKNRLEQGDVMAWLENCREEYDLIFIDPPTFSNSKRMEGIFDVQRDQVQLIDLAMARLASGGVLYFSNNFRKFQLEDNLAERYAVEEITASTIDPDFARNGKIHRAWKITAR.

Residues 46–157 (TAYRLCLWSR…RGEAILSLDL (112 aa)) enclose the THUMP domain. Over residues 395–409 (ERRTPEQRQAEREQA) the composition is skewed to basic and acidic residues. The segment at 395–441 (ERRTPEQRQAEREQAAYDQTPNEPQERKFNKNGNPIKPTPAPAPVIE) is disordered.

The protein belongs to the methyltransferase superfamily. RlmKL family.

It localises to the cytoplasm. The enzyme catalyses guanosine(2445) in 23S rRNA + S-adenosyl-L-methionine = N(2)-methylguanosine(2445) in 23S rRNA + S-adenosyl-L-homocysteine + H(+). It catalyses the reaction guanosine(2069) in 23S rRNA + S-adenosyl-L-methionine = N(2)-methylguanosine(2069) in 23S rRNA + S-adenosyl-L-homocysteine + H(+). In terms of biological role, specifically methylates the guanine in position 2445 (m2G2445) and the guanine in position 2069 (m7G2069) of 23S rRNA. This is Ribosomal RNA large subunit methyltransferase K/L from Pseudomonas fluorescens (strain Pf0-1).